Here is a 387-residue protein sequence, read N- to C-terminus: 1-deoxy-D-xylulose 5-phosphate reductoisomerase (387 aa).

Residues threonine 10, glycine 11, serine 12, valine 13, asparagine 38, and asparagine 119 each coordinate NADPH. Residue lysine 120 coordinates 1-deoxy-D-xylulose 5-phosphate. Glutamate 121 provides a ligand contact to NADPH. Aspartate 145 is a binding site for Mn(2+). 1-deoxy-D-xylulose 5-phosphate is bound by residues serine 146, glutamate 147, serine 170, and histidine 193. Glutamate 147 lines the Mn(2+) pocket. Residue glycine 199 participates in NADPH binding. Residues serine 206, asparagine 211, lysine 212, and glutamate 215 each contribute to the 1-deoxy-D-xylulose 5-phosphate site. Glutamate 215 provides a ligand contact to Mn(2+).

It belongs to the DXR family. It depends on Mg(2+) as a cofactor. Requires Mn(2+) as cofactor.

It carries out the reaction 2-C-methyl-D-erythritol 4-phosphate + NADP(+) = 1-deoxy-D-xylulose 5-phosphate + NADPH + H(+). It functions in the pathway isoprenoid biosynthesis; isopentenyl diphosphate biosynthesis via DXP pathway; isopentenyl diphosphate from 1-deoxy-D-xylulose 5-phosphate: step 1/6. In terms of biological role, catalyzes the NADPH-dependent rearrangement and reduction of 1-deoxy-D-xylulose-5-phosphate (DXP) to 2-C-methyl-D-erythritol 4-phosphate (MEP). This is 1-deoxy-D-xylulose 5-phosphate reductoisomerase from Wolbachia sp. subsp. Drosophila simulans (strain wRi).